Here is a 258-residue protein sequence, read N- to C-terminus: Acyl-[acyl-carrier-protein]--UDP-N-acetylglucosamine O-acyltransferase (258 aa).

The protein belongs to the transferase hexapeptide repeat family. LpxA subfamily. In terms of assembly, homotrimer.

Its subcellular location is the cytoplasm. The enzyme catalyses a (3R)-hydroxyacyl-[ACP] + UDP-N-acetyl-alpha-D-glucosamine = a UDP-3-O-[(3R)-3-hydroxyacyl]-N-acetyl-alpha-D-glucosamine + holo-[ACP]. It participates in glycolipid biosynthesis; lipid IV(A) biosynthesis; lipid IV(A) from (3R)-3-hydroxytetradecanoyl-[acyl-carrier-protein] and UDP-N-acetyl-alpha-D-glucosamine: step 1/6. Functionally, involved in the biosynthesis of lipid A, a phosphorylated glycolipid that anchors the lipopolysaccharide to the outer membrane of the cell. In Syntrophobacter fumaroxidans (strain DSM 10017 / MPOB), this protein is Acyl-[acyl-carrier-protein]--UDP-N-acetylglucosamine O-acyltransferase.